The primary structure comprises 307 residues: NAD(+) hydrolase TcpC (307 aa).

Residues 22–42 (YNILFFIFLSIAIPFLLFLAW) traverse the membrane as a helical segment. Residues 169–303 (THYDFFISHA…EIARELAEIA (135 aa)) enclose the TIR domain. NAD(+)-binding positions include 178 to 179 (AK) and E208. E244 is a catalytic residue.

In terms of assembly, interacts with host MYD88. Interacts with host TLR4.

The protein resides in the secreted. It localises to the membrane. It carries out the reaction NAD(+) + H2O = ADP-D-ribose + nicotinamide + H(+). It catalyses the reaction NADP(+) + H2O = ADP-D-ribose 2'-phosphate + nicotinamide + H(+). In terms of biological role, virulence factor that suppresses host Toll-like receptor (TLR)-mediated cytokine production upon infection, thereby increasing bacterial burden in the urinary tract and promoting renal tissue damage. Acts as a NAD(+) hydrolase (NADase) by catalyzing cleavage of NAD(+) into ADP-D-ribose (ADPR) and nicotinamide. Also able to hydrolyze NADP(+), but not other NAD(+)-related molecules. The polypeptide is NAD(+) hydrolase TcpC (Escherichia coli O6:H1 (strain CFT073 / ATCC 700928 / UPEC)).